Here is a 155-residue protein sequence, read N- to C-terminus: MSRRGTAEEKTAKSDPIYRNRLVNMLVNRILKHGKKSLAYQILYRAVKKIQQKTETNPLSVLRQAIRGVTPDIAVKARRVGGSTHQVPIEIGSTQGKALAIRWLLGASRKRPGRNMAFKLSSELVDAAKGSGDAIRKKEETHRMAEANRAFAHFR.

It belongs to the universal ribosomal protein uS7 family. In terms of assembly, part of the 30S ribosomal subunit.

It localises to the plastid. The protein resides in the chloroplast. In terms of biological role, one of the primary rRNA binding proteins, it binds directly to 16S rRNA where it nucleates assembly of the head domain of the 30S subunit. The polypeptide is Small ribosomal subunit protein uS7c (rps7) (Yucca glauca (Soapweed yucca)).